We begin with the raw amino-acid sequence, 145 residues long: Large ribosomal subunit protein bL19 (145 aa).

Over residues isoleucine 114–alanine 136 the composition is skewed to basic and acidic residues. The tract at residues isoleucine 114 to glutamate 145 is disordered.

This sequence belongs to the bacterial ribosomal protein bL19 family.

In terms of biological role, this protein is located at the 30S-50S ribosomal subunit interface and may play a role in the structure and function of the aminoacyl-tRNA binding site. This Methylocella silvestris (strain DSM 15510 / CIP 108128 / LMG 27833 / NCIMB 13906 / BL2) protein is Large ribosomal subunit protein bL19.